The sequence spans 377 residues: UPF0754 membrane protein BPUM_0927 (377 aa).

The next 2 membrane-spanning stretches (helical) occupy residues Met-1–Thr-21 and Phe-357–Phe-377.

Belongs to the UPF0754 family.

The protein resides in the cell membrane. The chain is UPF0754 membrane protein BPUM_0927 from Bacillus pumilus (strain SAFR-032).